A 197-amino-acid polypeptide reads, in one-letter code: Guanylate kinase (197 aa).

One can recognise a Guanylate kinase-like domain in the interval 7–185 (GLIIILSSPS…TLKKIHEIIV (179 aa)). 14–21 (SPSGTGKS) contributes to the ATP binding site.

Belongs to the guanylate kinase family.

It localises to the cytoplasm. It catalyses the reaction GMP + ATP = GDP + ADP. In terms of biological role, essential for recycling GMP and indirectly, cGMP. This Rickettsia typhi (strain ATCC VR-144 / Wilmington) protein is Guanylate kinase.